The primary structure comprises 112 residues: Nitrogen regulatory protein P-II (112 aa).

Residue Tyr51 is modified to O-UMP-tyrosine.

It belongs to the P(II) protein family. In terms of assembly, homotrimer. Uridylylated/deuridylylated by GlnD.

In terms of biological role, P-II indirectly controls the transcription of the glutamine synthetase gene (GlnA). P-II prevents NR-II-catalyzed conversion of NR-I to NR-I-phosphate, the transcriptional activator of GlnA. When P-II is uridylylated to P-II-UMP, these events are reversed. When the ratio of Gln to 2-ketoglutarate decreases, P-II is uridylylated to P-II-UMP, which causes the deadenylation of glutamine synthetase by GlnE, so activating the enzyme. In Haemophilus influenzae (strain ATCC 51907 / DSM 11121 / KW20 / Rd), this protein is Nitrogen regulatory protein P-II (glnB).